The primary structure comprises 236 residues: 7-cyano-7-deazaguanine synthase (236 aa).

7–17 (CSGGLDSVSLA) provides a ligand contact to ATP. Cysteine 185, cysteine 193, cysteine 196, and cysteine 199 together coordinate Zn(2+).

Belongs to the QueC family. It depends on Zn(2+) as a cofactor.

It catalyses the reaction 7-carboxy-7-deazaguanine + NH4(+) + ATP = 7-cyano-7-deazaguanine + ADP + phosphate + H2O + H(+). It functions in the pathway purine metabolism; 7-cyano-7-deazaguanine biosynthesis. Catalyzes the ATP-dependent conversion of 7-carboxy-7-deazaguanine (CDG) to 7-cyano-7-deazaguanine (preQ(0)). This chain is 7-cyano-7-deazaguanine synthase, found in Rhizobium etli (strain CIAT 652).